We begin with the raw amino-acid sequence, 377 residues long: Succinyl-diaminopimelate desuccinylase (377 aa).

H66 provides a ligand contact to Zn(2+). Residue D68 is part of the active site. Residue D99 participates in Zn(2+) binding. E133 (proton acceptor) is an active-site residue. Zn(2+)-binding residues include E134, E162, and H348.

This sequence belongs to the peptidase M20A family. DapE subfamily. As to quaternary structure, homodimer. It depends on Zn(2+) as a cofactor. Requires Co(2+) as cofactor.

It carries out the reaction N-succinyl-(2S,6S)-2,6-diaminopimelate + H2O = (2S,6S)-2,6-diaminopimelate + succinate. It functions in the pathway amino-acid biosynthesis; L-lysine biosynthesis via DAP pathway; LL-2,6-diaminopimelate from (S)-tetrahydrodipicolinate (succinylase route): step 3/3. Functionally, catalyzes the hydrolysis of N-succinyl-L,L-diaminopimelic acid (SDAP), forming succinate and LL-2,6-diaminopimelate (DAP), an intermediate involved in the bacterial biosynthesis of lysine and meso-diaminopimelic acid, an essential component of bacterial cell walls. This Histophilus somni (strain 129Pt) (Haemophilus somnus) protein is Succinyl-diaminopimelate desuccinylase.